Reading from the N-terminus, the 530-residue chain is Chaperonin GroEL (530 aa).

Residues 30 to 33 (TLGP), Lys51, 87 to 91 (DGTTT), Gly415, and Asp495 each bind ATP.

Belongs to the chaperonin (HSP60) family. Forms a cylinder of 14 subunits composed of two heptameric rings stacked back-to-back. Interacts with the co-chaperonin GroES.

The protein resides in the cytoplasm. It catalyses the reaction ATP + H2O + a folded polypeptide = ADP + phosphate + an unfolded polypeptide.. Functionally, together with its co-chaperonin GroES, plays an essential role in assisting protein folding. The GroEL-GroES system forms a nano-cage that allows encapsulation of the non-native substrate proteins and provides a physical environment optimized to promote and accelerate protein folding. The polypeptide is Chaperonin GroEL (Carsonella ruddii (strain PV)).